The sequence spans 229 residues: Sperm flagellar protein 1 (229 aa).

The region spanning 7 to 115 is the Calponin-homology (CH) domain; sequence EETMQELYTW…TLRQKIEEKQ (109 aa). The tract at residues 122 to 169 is disordered; the sequence is ADLSQDQATQNNGNTHSDKGYKSNGTELSPRQGARVDPASKTHQGYAQ. A compositionally biased stretch (polar residues) spans 123-136; the sequence is DLSQDQATQNNGNT. Residues 178–229 are essential for homodimerization and microtubule bundling activity; the sequence is RFQLAEKEQTLILSQETIQILQAKLRRLEQLLLLKNVRIDDLTRRLQELEKK.

Homodimer.

The protein localises to the cytoplasm. It localises to the cytoskeleton. The protein resides in the cilium axoneme. It is found in the apical cell membrane. In terms of biological role, microtubule-associated protein involved in the stabilization of microtubules along the axis of migration during radial intercalation. Promotes the establishment and stabilization of an axis of microtubules required for the active migration of cells into the outer epithelium. Microtubule-associated protein that promotes microtubule bundling and stabilizes microtubules against depolymerization in response to cold shock. Essential for ciliary central apparatus formation which requires both its microtubule-binding and bundling activities. Regulates planar cell polarity signaling pathway and asymmetric microtubule accumulation in ciliated epithelia. In Xenopus laevis (African clawed frog), this protein is Sperm flagellar protein 1.